Here is a 79-residue protein sequence, read N- to C-terminus: Acyl carrier protein (79 aa).

In terms of domain architecture, Carrier spans Ala4–Lys79. Ser39 carries the post-translational modification O-(pantetheine 4'-phosphoryl)serine.

Belongs to the acyl carrier protein (ACP) family. Post-translationally, 4'-phosphopantetheine is transferred from CoA to a specific serine of apo-ACP by AcpS. This modification is essential for activity because fatty acids are bound in thioester linkage to the sulfhydryl of the prosthetic group.

It localises to the cytoplasm. The protein operates within lipid metabolism; fatty acid biosynthesis. Carrier of the growing fatty acid chain in fatty acid biosynthesis. The polypeptide is Acyl carrier protein (Chlorobaculum parvum (strain DSM 263 / NCIMB 8327) (Chlorobium vibrioforme subsp. thiosulfatophilum)).